The sequence spans 544 residues: uncharacterized protein (544 aa).

The signal sequence occupies residues 1-22; it reads MYFSQNAIILVMLMFVISAVFY.

This is an uncharacterized protein from Methanocaldococcus jannaschii (strain ATCC 43067 / DSM 2661 / JAL-1 / JCM 10045 / NBRC 100440) (Methanococcus jannaschii).